Reading from the N-terminus, the 251-residue chain is MAAHLLIVDALNLIRRIHAVQGSPCVETCQHALDQLIIHSQPTHAVAVFDDDARSSGWRHQRLPDYKAGRPPMPDDLHNEMPALRAAFEQRGVRCWASDGNEADDLAATLALKVTEAGHQATIVSTDKGYCQLLSPGLRIRDYFQKRWLDAPFIEKEFGVLPRQLPDYWGLAGISSSKVPGVAGIGPKSATQLLIQFQNLEGIYAHLDEVPEKWRKKLEMHKEMAFLCRDIARLQTDLHIDGNLQQLRLAR.

D104 is a binding site for Mg(2+). In terms of domain architecture, 5'-3' exonuclease spans V160–L249. K(+)-binding residues include L171, A172, P180, V182, and I185. The interaction with DNA stretch occupies residues G184–S189.

It belongs to the Xni family. Requires Mg(2+) as cofactor. K(+) is required as a cofactor.

In terms of biological role, has flap endonuclease activity. During DNA replication, flap endonucleases cleave the 5'-overhanging flap structure that is generated by displacement synthesis when DNA polymerase encounters the 5'-end of a downstream Okazaki fragment. The chain is Flap endonuclease Xni from Salmonella schwarzengrund (strain CVM19633).